We begin with the raw amino-acid sequence, 628 residues long: MVMYARKQARLSDGCHDRRDSQPYQTLKYSSKSHPSSSDHRHDKMRDSTDPSPPNKMRRSNSPENKYIDSAGHGKAKSMHLHRVRERDGGTSFSPQENSHNHSAIHSSNSHSSTPSKTSDSAYDPADDWSEHISSSGKKYYYNCRTEVSQWEKPKEWLEREQRQKETSKVAVNSFPKDRDYRREAMQAAAAVEEKHSSDTSTMLPQNILSQTSRHNDRDYRLPRTDSHSSAAPVQQPVKAAVHPAAAPSTVPSSPFTVQPDHPPPKKSYDANGAALSKLPTPTSSIPVPKSERKETASSDKSSCTTPSTSSAPGLNLSAAPPSSSSSTVPVSPVPQSPIPPILQDPNLLRQLLPALQATLQLNNSNVDISKINEAAVTQASLQSILHKILTAGPSAFNITSLISQVAQLSAQAAQSNQSPMSLTSDASSPRSYVSPRISTPQTNTVPHKPLLSTPPVTSQPKVGTPGSKQGSSAQTASQQSSAADKSQGHEPTSPRNLQRSSSQRSPSPGPNHNSSTCASSTSAPQNSSARSSCSLTPTLAAYFNENLVKHVQGWPADHAEKQASRLREEAHNMGSIHMSEVCTELKNLRSLVRVCEIQATLREQRILFLRQQIKELEKLKNQNSFMV.

Disordered stretches follow at residues 1–130 (MVMY…DDWS), 152–338 (EKPK…PQSP), and 417–532 (NQSP…SARS). Basic and acidic residues predominate over residues 37–49 (SSDHRHDKMRDST). Positions 74 to 84 (GKAKSMHLHRV) are enriched in basic residues. Residues 101–121 (NHSAIHSSNSHSSTPSKTSDS) show a composition bias toward low complexity. Positions 123–156 (YDPADDWSEHISSSGKKYYYNCRTEVSQWEKPKE) constitute a WW domain. Composition is skewed to basic and acidic residues over residues 152 to 168 (EKPKEWLEREQRQKETS) and 176 to 185 (PKDRDYRREA). The segment covering 199 to 213 (DTSTMLPQNILSQTS) has biased composition (polar residues). A compositionally biased stretch (basic and acidic residues) spans 214–227 (RHNDRDYRLPRTDS). Low complexity-rich tracts occupy residues 230-260 (SAAPVQQPVKAAVHPAAAPSTVPSSPFTVQP) and 299-331 (SDKSSCTTPSTSSAPGLNLSAAPPSSSSSTVPV). Over residues 420–446 (PMSLTSDASSPRSYVSPRISTPQTNTV) the composition is skewed to polar residues. A compositionally biased stretch (low complexity) spans 467–486 (GSKQGSSAQTASQQSSAADK). The segment covering 511–532 (PNHNSSTCASSTSAPQNSSARS) has biased composition (polar residues). Positions 599 to 625 (QATLREQRILFLRQQIKELEKLKNQNS) form a coiled coil.

The protein localises to the nucleus. Acts as a linker between gene transcription and histone H2B monoubiquitination at 'Lys-120' (H2BK120ub1). Positive regulator of amino acid starvation-induced autophagy. Positively regulates MTOR activity. May negatively regulate the ubiquitin proteasome pathway. This is WW domain-containing adapter protein with coiled-coil (wac) from Xenopus tropicalis (Western clawed frog).